Reading from the N-terminus, the 260-residue chain is Snake venom serine protease homolog (260 aa).

The N-terminal stretch at 1 to 18 is a signal peptide; the sequence is MVLVRVLANLLMLQLSYA. Positions 19 to 24 are excised as a propeptide; that stretch reads QKSSEL. One can recognise a Peptidase S1 domain in the interval 25-251; it reads IIGGDECNIN…HLNWIQSIIA (227 aa). Cystine bridges form between Cys31–Cys165, Cys52–Cys68, Cys100–Cys258, Cys144–Cys212, Cys176–Cys191, and Cys202–Cys227. N-linked (GlcNAc...) asparagine glycans are attached at residues Asn123 and Asn124. Asn253 carries N-linked (GlcNAc...) asparagine glycosylation.

It belongs to the peptidase S1 family. Snake venom subfamily. As to expression, expressed by the venom gland.

It is found in the secreted. Snake venom serine protease homolog that may act in the hemostasis system of the prey. In Protobothrops jerdonii (Jerdon's pitviper), this protein is Snake venom serine protease homolog.